A 1626-amino-acid chain; its full sequence is DNA topoisomerase 2-beta (1626 aa).

Alanine 2 is subject to N-acetylalanine. The residue at position 3 (lysine 3) is an N6-acetyllysine. Glycyl lysine isopeptide (Lys-Gly) (interchain with G-Cter in SUMO2) cross-links involve residues glutamine 28, asparagine 29, lysine 33, and lysine 34. ATP contacts are provided by residues asparagine 112, asparagine 141, and 169 to 171 (SSN). Residues lysine 177 and lysine 178 each participate in a glycyl lysine isopeptide (Lys-Gly) (interchain with G-Cter in SUMO2) cross-link. 182 to 189 (GRNGYGAK) provides a ligand contact to ATP. Residues lysine 228 and lysine 299 each participate in a glycyl lysine isopeptide (Lys-Gly) (interchain with G-Cter in SUMO2) cross-link. The tract at residues 363–365 (KKK) is interaction with DNA. Residues lysine 367 and lysine 373 each participate in a glycyl lysine isopeptide (Lys-Gly) (interchain with G-Cter in SUMO2) cross-link. 397 to 399 (QTK) is an ATP binding site. Glycyl lysine isopeptide (Lys-Gly) (interchain with G-Cter in SUMO2) cross-links involve residues lysine 437, lysine 439, and lysine 446. The region spanning 476–593 (CTLILTEGDS…SLLKHGFLEE (118 aa)) is the Toprim domain. Positions 482, 562, and 564 each coordinate Mg(2+). Glycyl lysine isopeptide (Lys-Gly) (interchain with G-Cter in SUMO2) cross-links involve residues lysine 600, lysine 605, lysine 635, lysine 643, lysine 646, lysine 676, and lysine 712. Residues 736–1189 (IPSLVDGFKP…SPSDLWKEDL (454 aa)) form the Topo IIA-type catalytic domain. Tyrosine 826 acts as the O-(5'-phospho-DNA)-tyrosine intermediate in catalysis. Residues 1011–1020 (KLQTTLTCNS) are interaction with DNA. The short motif at 1034 to 1044 (ETVQDILKEFF) is the Nuclear export signal element. Lysine 1092 is covalently cross-linked (Glycyl lysine isopeptide (Lys-Gly) (interchain with G-Cter in SUMO2)). Residues 1110 to 1140 (AWKEAQEKAAEEDETQNQHDDSSSDSGTPSG) are disordered. Residues lysine 1214, lysine 1217, lysine 1226, and lysine 1227 each participate in a glycyl lysine isopeptide (Lys-Gly) (interchain with G-Cter in SUMO2) cross-link. Serine 1236 bears the Phosphoserine mark. Glycyl lysine isopeptide (Lys-Gly) (interchain with G-Cter in SUMO2) cross-links involve residues lysine 1250, lysine 1262, and lysine 1271. The interval 1274-1604 (FDEEFSGAPV…PSLPRTGRAR (331 aa)) is disordered. The residue at position 1292 (threonine 1292) is a Phosphothreonine. Residues lysine 1323 and lysine 1327 each participate in a glycyl lysine isopeptide (Lys-Gly) (interchain with G-Cter in SUMO2) cross-link. 2 stretches are compositionally biased toward basic and acidic residues: residues 1334–1344 (PWSDDESKSES) and 1358–1370 (SLLRRAAAERPKY). A phosphoserine mark is found at serine 1336, serine 1340, serine 1342, serine 1344, and serine 1358. Tyrosine 1370 carries the phosphotyrosine modification. A compositionally biased stretch (acidic residues) spans 1374–1392 (FSEEEDDDADDDDDDNNDL). Serine 1375 carries the phosphoserine modification. Residue lysine 1398 forms a Glycyl lysine isopeptide (Lys-Gly) (interchain with G-Cter in SUMO2) linkage. Serine 1400 is subject to Phosphoserine. Threonine 1403 bears the Phosphothreonine mark. Serine 1413 carries the phosphoserine modification. Tyrosine 1421 carries the phosphotyrosine modification. A Phosphoserine modification is found at serine 1424. Positions 1430–1442 (ATPEKSLHDKKSQ) are enriched in basic and acidic residues. Lysine 1440 participates in a covalent cross-link: Glycyl lysine isopeptide (Lys-Gly) (interchain with G-Cter in SUMO2). A phosphoserine mark is found at serine 1441, serine 1452, and serine 1454. Lysine 1456 participates in a covalent cross-link: Glycyl lysine isopeptide (Lys-Gly) (interchain with G-Cter in SUMO2). The segment covering 1456–1466 (KSEDDSAKFDS) has biased composition (basic and acidic residues). Residues serine 1461, serine 1466, serine 1473, and serine 1476 each carry the phosphoserine modification. A Glycyl lysine isopeptide (Lys-Gly) (interchain with G-Cter in SUMO2) cross-link involves residue lysine 1490. Residues 1506 to 1512 (KPKRAPK) are interaction with PLSCR1. A phosphoserine mark is found at serine 1522, serine 1524, and serine 1526. Basic residues predominate over residues 1539 to 1549 (GKGRGAKKRKA). Serine 1550 and serine 1552 each carry phosphoserine. Basic residues predominate over residues 1563 to 1574 (KTSKTTSKKPKK). The residue at position 1575 (threonine 1575) is a Phosphothreonine. Residues serine 1576 and serine 1581 each carry the phosphoserine modification. Phosphothreonine is present on threonine 1592. Phosphoserine is present on serine 1596. Residue tyrosine 1609 is modified to Phosphotyrosine. The residue at position 1613 (serine 1613) is a Phosphoserine.

The protein belongs to the type II topoisomerase family. In terms of assembly, homodimer. Interacts with KIAA1210. Interacts with PLSCR1. Mg(2+) serves as cofactor. It depends on Mn(2+) as a cofactor. Ca(2+) is required as a cofactor. (Microbial infection) Deubiquitinated by Epstein-Barr virus BPLF1; leading to stabilized SUMOylated TOP2A trapped in cleavage complexes, which halts the DNA damage response to TOP2A-induced double-strand DNA breaks. In terms of processing, SUMOylated. In terms of tissue distribution, expressed in the tonsil, spleen, lymph node, thymus, skin, pancreas, testis, colon, kidney, liver, brain and lung. Also found in breast, colon and lung carcinomas, Hodgkin's disease, large-cell non-Hodgkin's lymphoma, lymphocytic lymphomas and seminomas.

The protein resides in the nucleus. It localises to the nucleolus. It is found in the nucleoplasm. It carries out the reaction ATP-dependent breakage, passage and rejoining of double-stranded DNA.. Functionally, key decatenating enzyme that alters DNA topology by binding to two double-stranded DNA molecules, generating a double-stranded break in one of the strands, passing the intact strand through the broken strand, and religating the broken strand. Plays a role in B-cell differentiation. This chain is DNA topoisomerase 2-beta (TOP2B), found in Homo sapiens (Human).